We begin with the raw amino-acid sequence, 238 residues long: N-methyltransferase vrtF (238 aa).

This sequence belongs to the methyltransferase superfamily.

It functions in the pathway secondary metabolite biosynthesis; terpenoid biosynthesis. Functionally, N-methyltransferase; part of the gene cluster that mediates the biosynthesis of viridicatumtoxin, a tetracycline-like fungal meroterpenoid with a unique, fused spirobicyclic ring system. The first step of the pathway is the production of the malonamoyl-CoA starter unit for the polyketide synthase vrtA. The aldolase vrtJ may be involved in the synthesis of the malonamate substrate for malonamoyl-CoA synthetase vrtB. The polyketide synthase vrtA then may utilize the malonamoyl-CoA starter unit, followed by sequential condensation of eight malonyl-CoA units to form the polyketide backbone. The cyclization of the last ring could be mediated by the lactamase-like protein vrtG. The proposed post-PKS tailoring steps are a hydroxylation at C5 catalyzed the cytochrome P450 monooxygenase vrtE, a hydroxylation at C12a catalyzed by VrtH and/or VrtI, and an O-methylation by the O-methyltransferase vrtF. VrtC is then proposed to catalyze the transfer of a geranyl group synthesized by vrtD to the aromatic C ring of the tetracyclic polyketide intermediate of viridicatumtoxin to yield previridicatumtoxin. Finally, the cytochrome P450 monooxygenase vrtK catalyzes the spirocyclization of the geranyl moiety of previridicatumtoxin to afford viridicatumtoxin. In Penicillium aethiopicum, this protein is N-methyltransferase vrtF.